Here is a 654-residue protein sequence, read N- to C-terminus: tRNA uridine 5-carboxymethylaminomethyl modification enzyme MnmG (654 aa).

17-22 (GGGHAG) is an FAD binding site. 289–303 (GPRYCPSIEDKIVKF) serves as a coordination point for NAD(+).

The protein belongs to the MnmG family. In terms of assembly, homodimer. Heterotetramer of two MnmE and two MnmG subunits. Requires FAD as cofactor.

It is found in the cytoplasm. Its function is as follows. NAD-binding protein involved in the addition of a carboxymethylaminomethyl (cmnm) group at the wobble position (U34) of certain tRNAs, forming tRNA-cmnm(5)s(2)U34. The protein is tRNA uridine 5-carboxymethylaminomethyl modification enzyme MnmG of Prochlorococcus marinus (strain MIT 9515).